The sequence spans 456 residues: ATP synthase subunit beta (456 aa).

135-142 (GGAGVGKT) contacts ATP.

It belongs to the ATPase alpha/beta chains family. F-type ATPases have 2 components, CF(1) - the catalytic core - and CF(0) - the membrane proton channel. CF(1) has five subunits: alpha(3), beta(3), gamma(1), delta(1), epsilon(1). CF(0) has four main subunits: a(1), b(1), b'(1) and c(9-12).

It is found in the cellular thylakoid membrane. The catalysed reaction is ATP + H2O + 4 H(+)(in) = ADP + phosphate + 5 H(+)(out). Its function is as follows. Produces ATP from ADP in the presence of a proton gradient across the membrane. The catalytic sites are hosted primarily by the beta subunits. This chain is ATP synthase subunit beta (atpD), found in Acaryochloris marina (strain MBIC 11017).